The chain runs to 310 residues: ADP-L-glycero-D-manno-heptose-6-epimerase (310 aa).

Residues 10 to 11 (FI), 31 to 32 (DN), Lys-38, Lys-53, 75 to 79 (EGACS), and Asn-92 each bind NADP(+). Tyr-140 serves as the catalytic Proton acceptor. Lys-144 is a binding site for NADP(+). Asn-169 contributes to the substrate binding site. NADP(+) is bound by residues Val-170 and Lys-178. Lys-178 acts as the Proton acceptor in catalysis. Substrate is bound by residues Ser-180, His-187, 201–204 (FEGS), Arg-209, and Tyr-272.

This sequence belongs to the NAD(P)-dependent epimerase/dehydratase family. HldD subfamily. As to quaternary structure, homopentamer. The cofactor is NADP(+).

It carries out the reaction ADP-D-glycero-beta-D-manno-heptose = ADP-L-glycero-beta-D-manno-heptose. It participates in nucleotide-sugar biosynthesis; ADP-L-glycero-beta-D-manno-heptose biosynthesis; ADP-L-glycero-beta-D-manno-heptose from D-glycero-beta-D-manno-heptose 7-phosphate: step 4/4. In terms of biological role, catalyzes the interconversion between ADP-D-glycero-beta-D-manno-heptose and ADP-L-glycero-beta-D-manno-heptose via an epimerization at carbon 6 of the heptose. The protein is ADP-L-glycero-D-manno-heptose-6-epimerase of Salmonella heidelberg (strain SL476).